The primary structure comprises 287 residues: 4-diphosphocytidyl-2-C-methyl-D-erythritol kinase (287 aa).

Lysine 11 is an active-site residue. 93-103 (PFGAGLGGGSS) is an ATP binding site. Residue aspartate 135 is part of the active site.

The protein belongs to the GHMP kinase family. IspE subfamily.

It catalyses the reaction 4-CDP-2-C-methyl-D-erythritol + ATP = 4-CDP-2-C-methyl-D-erythritol 2-phosphate + ADP + H(+). Its pathway is isoprenoid biosynthesis; isopentenyl diphosphate biosynthesis via DXP pathway; isopentenyl diphosphate from 1-deoxy-D-xylulose 5-phosphate: step 3/6. Its function is as follows. Catalyzes the phosphorylation of the position 2 hydroxy group of 4-diphosphocytidyl-2C-methyl-D-erythritol. The protein is 4-diphosphocytidyl-2-C-methyl-D-erythritol kinase of Chlorobium luteolum (strain DSM 273 / BCRC 81028 / 2530) (Pelodictyon luteolum).